The chain runs to 297 residues: PsbP domain-containing protein 5, chloroplastic (297 aa).

Belongs to the PsbP family.

It is found in the plastid. It localises to the chloroplast thylakoid lumen. Involved in strigolactone biosynthesis. This is PsbP domain-containing protein 5, chloroplastic (PPD5) from Arabidopsis thaliana (Mouse-ear cress).